We begin with the raw amino-acid sequence, 72 residues long: SRY-related protein MG42 (72 aa).

Positions Val1 to Lys69 form a DNA-binding region, HMG box.

The protein localises to the nucleus. This chain is SRY-related protein MG42, found in Tarentola mauritanica (Common wall gecko).